Consider the following 380-residue polypeptide: Probable pectin lyase A (380 aa).

An N-terminal signal peptide occupies residues 1 to 20 (MRYTSLFTAVTAALASTAAA). 2 disulfide bridges follow: Cys-83-Cys-102 and Cys-92-Cys-226. An N-linked (GlcNAc...) asparagine glycan is attached at Asn-129. Arg-256 is an active-site residue. A disulfide bond links Cys-323 and Cys-331.

It belongs to the polysaccharide lyase 1 family.

The protein resides in the secreted. It catalyses the reaction Eliminative cleavage of (1-&gt;4)-alpha-D-galacturonan methyl ester to give oligosaccharides with 4-deoxy-6-O-methyl-alpha-D-galact-4-enuronosyl groups at their non-reducing ends.. Functionally, pectinolytic enzymes consist of four classes of enzymes: pectin lyase, polygalacturonase, pectin methylesterase and rhamnogalacturonase. Among pectinolytic enzymes, pectin lyase is the most important in depolymerization of pectin, since it cleaves internal glycosidic bonds of highly methylated pectins. This Aspergillus fumigatus (strain ATCC MYA-4609 / CBS 101355 / FGSC A1100 / Af293) (Neosartorya fumigata) protein is Probable pectin lyase A (pelA).